Consider the following 138-residue polypeptide: 16 kDa phloem protein 2 (138 aa).

The C2 domain maps to 1-108; the sequence is MGMGMMEVHL…LAEGVRKGWS (108 aa). Ca(2+) contacts are provided by Asp-20, Asp-27, Asp-78, Asp-80, and Asp-86.

The cofactor is Ca(2+). In terms of tissue distribution, sieve elements of leaves, stems, roots and flowers.

Its function is as follows. Binds to both sense and antisense RNA. Interacts with mesophyll plasmodesmata to mediate its own cell-to-cell transport and potentiate RNA trafficking. This is 16 kDa phloem protein 2 (PP16-2) from Cucurbita maxima (Pumpkin).